Consider the following 355-residue polypeptide: Aurora kinase (355 aa).

One can recognise a Protein kinase domain in the interval 89-340 (FEIGKPLGKG…LEQVMRHPWI (252 aa)). Residues 95-103 (LGKGKFGRV) and K118 each bind ATP. D212 acts as the Proton acceptor in catalysis.

It belongs to the protein kinase superfamily. Ser/Thr protein kinase family. Aurora subfamily. Component of the CPC complex at least composed of ark1, bir1 and pic1. Interacts with the mitotic checkpoint complex (MCC) subunit mad3.

It localises to the nucleus. Its subcellular location is the cytoplasm. The protein localises to the cytoskeleton. The protein resides in the spindle. It carries out the reaction L-seryl-[protein] + ATP = O-phospho-L-seryl-[protein] + ADP + H(+). The catalysed reaction is L-threonyl-[protein] + ATP = O-phospho-L-threonyl-[protein] + ADP + H(+). Functionally, component of the chromosomal passenger complex (CPC), a complex that acts as a key regulator of chromosome segregation and cytokinesis. Has a role in error-correction of aberrent kinetochore-microtubule attachments to ensure that sister kinetochores become bioriented and connect to opposite poles by promoting spindle assembly checkpoint signaling. Ark1 is also required for phosphorylation of histone H3 that accompanies chromosome condensation and condensin recruitment to mitotic chromatin. This Schizosaccharomyces pombe (strain 972 / ATCC 24843) (Fission yeast) protein is Aurora kinase (ark1).